A 209-amino-acid chain; its full sequence is GTP-binding nuclear protein Ran1B (209 aa).

The region spanning Asn-1–Asp-162 is the Small GTPase Ran-type domain. Asp-9 to Thr-16 lines the GTP pocket. Residues Lys-28–Val-36 form a switch-I region. GTP contacts are provided by residues Gly-59, Asn-113–Asp-116, and Ser-141–Lys-143. The segment at Gly-59 to Gln-75 is switch-II. Over residues Gln-187 to Leu-200 the composition is skewed to low complexity. Residues Gln-187–Asp-209 form a disordered region.

The protein belongs to the small GTPase superfamily. Ran family. In terms of assembly, found in a nuclear export complex with RanGTP, exportin and pre-miRNA.

It is found in the nucleus. In terms of biological role, GTP-binding protein involved in nucleocytoplasmic transport. Required for the import of protein into the nucleus and also for RNA export. Involved in chromatin condensation and control of cell cycle. This chain is GTP-binding nuclear protein Ran1B (RAN1B), found in Lotus japonicus (Lotus corniculatus var. japonicus).